The chain runs to 233 residues: Biosynthetic peptidoglycan transglycosylase (233 aa).

A helical membrane pass occupies residues 8-28 (LIALPVGIFIFFNAYVYGNII).

The protein belongs to the glycosyltransferase 51 family.

The protein localises to the cell inner membrane. It carries out the reaction [GlcNAc-(1-&gt;4)-Mur2Ac(oyl-L-Ala-gamma-D-Glu-L-Lys-D-Ala-D-Ala)](n)-di-trans,octa-cis-undecaprenyl diphosphate + beta-D-GlcNAc-(1-&gt;4)-Mur2Ac(oyl-L-Ala-gamma-D-Glu-L-Lys-D-Ala-D-Ala)-di-trans,octa-cis-undecaprenyl diphosphate = [GlcNAc-(1-&gt;4)-Mur2Ac(oyl-L-Ala-gamma-D-Glu-L-Lys-D-Ala-D-Ala)](n+1)-di-trans,octa-cis-undecaprenyl diphosphate + di-trans,octa-cis-undecaprenyl diphosphate + H(+). The protein operates within cell wall biogenesis; peptidoglycan biosynthesis. In terms of biological role, peptidoglycan polymerase that catalyzes glycan chain elongation from lipid-linked precursors. In Neisseria meningitidis serogroup B (strain ATCC BAA-335 / MC58), this protein is Biosynthetic peptidoglycan transglycosylase.